A 497-amino-acid chain; its full sequence is mRNA cleavage and polyadenylation factor CLP1 (497 aa).

Residues glutamate 34, lysine 73, and 157–162 (HSGKTS) each bind ATP.

The protein belongs to the Clp1 family. Clp1 subfamily. As to quaternary structure, component of a pre-mRNA cleavage factor complex. Interacts directly with PCF11.

The protein localises to the nucleus. In terms of biological role, required for endonucleolytic cleavage during polyadenylation-dependent pre-mRNA 3'-end formation. The polypeptide is mRNA cleavage and polyadenylation factor CLP1 (Debaryomyces hansenii (strain ATCC 36239 / CBS 767 / BCRC 21394 / JCM 1990 / NBRC 0083 / IGC 2968) (Yeast)).